Consider the following 515-residue polypeptide: Galactose/methyl galactoside import ATP-binding protein MglA (515 aa).

2 ABC transporter domains span residues 8–243 (LEMR…VGRE) and 254–499 (IPKE…AKYL). 40 to 47 (GENGAGKS) contacts ATP.

It belongs to the ABC transporter superfamily. Galactose/methyl galactoside importer (TC 3.A.1.2.3) family. In terms of assembly, the complex is composed of one ATP-binding protein (MglA), two transmembrane proteins (MglC) and a solute-binding protein (MglB).

It is found in the cell membrane. The catalysed reaction is D-galactose(out) + ATP + H2O = D-galactose(in) + ADP + phosphate + H(+). It carries out the reaction methyl beta-D-galactoside(out) + ATP + H2O = methyl beta-D-galactoside(in) + ADP + phosphate + H(+). Part of the ABC transporter complex MglABC involved in galactose/methyl galactoside import. Responsible for energy coupling to the transport system. The polypeptide is Galactose/methyl galactoside import ATP-binding protein MglA (Clostridium perfringens (strain 13 / Type A)).